The chain runs to 234 residues: Thrombin-like enzyme acutin (234 aa).

Met-1 is a propeptide. The Peptidase S1 domain maps to 2-225 (VIGGDECDIN…YTDWIQRNIA (224 aa)). Intrachain disulfides connect Cys-8–Cys-140, Cys-27–Cys-43, Cys-75–Cys-232, Cys-119–Cys-186, Cys-151–Cys-165, and Cys-176–Cys-201. Asn-21 is a glycosylation site (N-linked (GlcNAc...) asparagine). Catalysis depends on charge relay system residues His-42 and Asp-87. Ser-180 serves as the catalytic Charge relay system.

It belongs to the peptidase S1 family. Snake venom subfamily. In terms of assembly, monomer. In terms of tissue distribution, expressed by the venom gland.

The protein resides in the secreted. Functionally, thrombin-like snake venom serine protease. Has arginyl esterase and fibrinogen clotting activities. The chain is Thrombin-like enzyme acutin from Deinagkistrodon acutus (Hundred-pace snake).